The following is a 598-amino-acid chain: DNA mismatch repair protein MutL (598 aa).

This sequence belongs to the DNA mismatch repair MutL/HexB family.

Functionally, this protein is involved in the repair of mismatches in DNA. It is required for dam-dependent methyl-directed DNA mismatch repair. May act as a 'molecular matchmaker', a protein that promotes the formation of a stable complex between two or more DNA-binding proteins in an ATP-dependent manner without itself being part of a final effector complex. The sequence is that of DNA mismatch repair protein MutL from Geotalea daltonii (strain DSM 22248 / JCM 15807 / FRC-32) (Geobacter daltonii).